A 747-amino-acid chain; its full sequence is UPF0313 protein PA4928 (747 aa).

The Radical SAM core domain occupies 371–640 (AYEMIRFSVN…KSDQQRRLHK (270 aa)). [4Fe-4S] cluster is bound by residues Cys385, Cys389, and Cys392. The disordered stretch occupies residues 670-747 (GKHHLVPTYQ…KKSRQPNIPR (78 aa)).

This sequence belongs to the UPF0313 family. [4Fe-4S] cluster is required as a cofactor.

This chain is UPF0313 protein PA4928, found in Pseudomonas aeruginosa (strain ATCC 15692 / DSM 22644 / CIP 104116 / JCM 14847 / LMG 12228 / 1C / PRS 101 / PAO1).